The primary structure comprises 800 residues: Cation/H(+) antiporter 9 (800 aa).

Helical transmembrane passes span 43 to 63 (VIFGYALPLLELQIILIFVCI), 73 to 93 (IGIPRFVSNILAGLILGPQLL), 110 to 130 (NVALEGVARLGLVMFTFLMGV), 145 to 165 (IVIAVSSFFVTMISGLAFRNF), 186 to 206 (VIVSIQAVTLLPVITHLVYEL), 216 to 236 (IAISTAAVSDFLGFLTLVCIS), 247 to 267 (GIANRDIVALIILVLVILFIF), 287 to 306 (VYLYVTILTAIAASIYLSVF), 338 to 358 (LVTNIFFPISIAVMAMKADVV), 371 to 391 (ILLLGLTVVVKWTASFVPCLI), 401 to 421 (VIIATIMNYKGFVDLCFFDVA), and 430 to 450 (ATYTVMIIYVLLNAGILPTII).

Belongs to the monovalent cation:proton antiporter 2 (CPA2) transporter (TC 2.A.37) family. CHX (TC 2.A.37.4) subfamily.

It is found in the membrane. In terms of biological role, may operate as a cation/H(+) antiporter. The protein is Cation/H(+) antiporter 9 (CHX9) of Arabidopsis thaliana (Mouse-ear cress).